The following is a 577-amino-acid chain: General transcription factor IIF subunit 1 (577 aa).

The tract at residues 1–36 (MSSASKSTPSAASGSSTSAAAAAAASVASGSASSSA) is disordered. Phosphoserine occurs at positions 183, 246, 250, and 252. A disordered region spans residues 236–508 (KITDMDEWID…TSLPTSFSGG (273 aa)). The segment covering 240-256 (MDEWIDSEDESDSEDEE) has biased composition (acidic residues). Residues 257-271 (DKKKKEQEDSDDGKA) are compositionally biased toward basic and acidic residues. Positions 272-285 (KGKGKKGADKKKKK) are enriched in basic residues. Positions 289–304 (DDEAFEESDDGDEEGR) are enriched in acidic residues. Residues 319–341 (PEAKVDKDMKGVAEEDALRKLLT) show a composition bias toward basic and acidic residues. Thr341 bears the Phosphothreonine mark. Phosphoserine is present on residues Ser342, Ser352, and Ser355. Positions 362–376 (GEKKKKDKGKDEVSK) are enriched in basic and acidic residues. Positions 392 to 406 (SNGSGDSSTDFSSDS) are enriched in low complexity. Basic and acidic residues predominate over residues 423–437 (VVKDKDKEKEKEKES). The span at 438-456 (AASSKVIASSSNANKSRSA) shows a compositional bias: low complexity. A phosphoserine mark is found at Ser453 and Ser455. Thr457 bears the Phosphothreonine mark. Polar residues-rich tracts occupy residues 471 to 489 (SLPS…TSTP) and 496 to 506 (EISTSLPTSFS). Ser482 and Ser484 each carry phosphoserine. Thr488 is modified (phosphothreonine).

Belongs to the TFIIF alpha subunit family. In terms of assembly, heterodimer of an alpha and a beta subunit. In terms of processing, phosphorylated on Ser and other residues by TAF1 and casein kinase II-like kinases.

The protein resides in the nucleus. Its function is as follows. TFIIF is a general transcription initiation factor that binds to RNA polymerase II and helps to recruit it to the initiation complex in collaboration with TFIIB. It promotes transcription elongation. The polypeptide is General transcription factor IIF subunit 1 (Drosophila melanogaster (Fruit fly)).